Consider the following 210-residue polypeptide: Putative fructokinase-8 (210 aa).

The protein belongs to the carbohydrate kinase PfkB family.

It carries out the reaction D-fructose + ATP = D-fructose 6-phosphate + ADP + H(+). It participates in glycan biosynthesis; starch biosynthesis. Functionally, may play an important role in maintaining the flux of carbon towards starch formation. The sequence is that of Putative fructokinase-8 from Arabidopsis thaliana (Mouse-ear cress).